A 345-amino-acid polypeptide reads, in one-letter code: MQLSDFSFELPDELIARYPLETRSASRLLHLDAKGQYHDHMFTDIIDLFEEGDLLVLNDTKVMKARLKGKRATGGAIEILVERMLNHTTAYCHIKASNSPKAGAELFVGADNIPVIVRGRHENLFVVEFSQPILPVLEQYGQLPIPPYFNREAEEIDTERYQTVFHNPEKIASVAAPTASLHFDEELLAELDQKGVKKTFVTLHVGAGTFMPVRTDDITNHVMHSEWCDVPQETIDLILATKARGNKVIAVGTTATRALESAAQAHGGKIAAWTGDTQIFIYPGYEFCIVDRLITNFHLPESTLLMLVSALSNRENILAAYEHAVKDRYRFFSYGDAMLIDKLEV.

Belongs to the QueA family. Monomer.

The protein resides in the cytoplasm. The catalysed reaction is 7-aminomethyl-7-carbaguanosine(34) in tRNA + S-adenosyl-L-methionine = epoxyqueuosine(34) in tRNA + adenine + L-methionine + 2 H(+). The protein operates within tRNA modification; tRNA-queuosine biosynthesis. In terms of biological role, transfers and isomerizes the ribose moiety from AdoMet to the 7-aminomethyl group of 7-deazaguanine (preQ1-tRNA) to give epoxyqueuosine (oQ-tRNA). This Acinetobacter baumannii (strain AB0057) protein is S-adenosylmethionine:tRNA ribosyltransferase-isomerase.